The sequence spans 286 residues: UPF0761 membrane protein KPK_5501 (286 aa).

The next 7 membrane-spanning stretches (helical) occupy residues 44–64 (LLSL…FPMF), 74–94 (FIFA…IEQF), 104–124 (VGAF…DSAL), 140–160 (FAVY…SLAI), 183–203 (LFPL…VPTT), 210–230 (AVIG…AFAL), and 244–264 (VISV…IVLL).

The protein belongs to the UPF0761 family.

It localises to the cell inner membrane. This chain is UPF0761 membrane protein KPK_5501, found in Klebsiella pneumoniae (strain 342).